Here is a 196-residue protein sequence, read N- to C-terminus: Molybdopterin synthase catalytic subunit (196 aa).

Residues 110-111, Lys-126, and 133-135 contribute to the substrate site; these read HR and KKE. Residues 142–196 form a disordered region; it reads GGIWRANRDGAVGERVDEDEEKKKPDMGPHGPILRPSRPGERGHGPVVRNHQLGS. Over residues 147–168 the composition is skewed to basic and acidic residues; that stretch reads ANRDGAVGERVDEDEEKKKPDM.

It belongs to the MoaE family. MOCS2B subfamily. In terms of assembly, heterotetramer; composed of 2 small (MOCS2A) and 2 large (MOCS2B) subunits.

It localises to the cytoplasm. The enzyme catalyses 2 [molybdopterin-synthase sulfur-carrier protein]-C-terminal-Gly-aminoethanethioate + cyclic pyranopterin phosphate + H2O = molybdopterin + 2 [molybdopterin-synthase sulfur-carrier protein]-C-terminal Gly-Gly + 2 H(+). It functions in the pathway cofactor biosynthesis; molybdopterin biosynthesis. Its function is as follows. Catalytic subunit of the molybdopterin synthase complex, a complex that catalyzes the conversion of precursor Z into molybdopterin. Acts by mediating the incorporation of 2 sulfur atoms from thiocarboxylated MOCS2A into precursor Z to generate a dithiolene group. In Sclerotinia sclerotiorum (strain ATCC 18683 / 1980 / Ss-1) (White mold), this protein is Molybdopterin synthase catalytic subunit.